The following is a 456-amino-acid chain: MEASWGSFNAERGWYVSVQQPEEAEAEELSPLLSNELHRQRSPGVSFGLSVFNLMNAIMGSGILGLAYVLANTGVFGFSFLLLTVALLASYSVHLLLSMCIQTAVTSYEDLGLFAFGLPGKLVVAGTIIIQNIGAMSSYLLIIKTELPAAIAEFLTGDYSRYWYLDGQTLLIIICVGIVFPLALLPKIGFLGYTSSLSFFFMMFFALVVIIKKWSIPCPLTLNYVEKGFQISNVTDDCKPKLFHFSKESAYALPTMAFSFLCHTSILPIYCELQSPSKKRMQNVTNTAIALSFLIYFISALFGYLTFYDKVESELLKGYSKYLSHDVVVMTVKLCILFAVLLTVPLIHFPARKAVTMMFFSNFPFSWIRHFLITLALNIIIVLLAIYVPDIRNVFGVVGASTSTCLIFIFPGLFYLKLSREDFLSWKKLGAFVLLIFGILVGNFSLALIIFDWINK.

Position 1 is an N-acetylmethionine (Met-1). Ser-4 and Ser-7 each carry phosphoserine. Helical transmembrane passes span 42 to 62 (SPGVSFGLSVFNLMNAIMGSG), 85 to 105 (VALLASYSVHLLLSMCIQTAV), 111 to 131 (LGLFAFGLPGKLVVAGTIIIQ), 170 to 190 (LLIIICVGIVFPLALLPKIGF), and 191 to 211 (LGYTSSLSFFFMMFFALVVII). Cys-218 and Cys-238 are joined by a disulfide. Asn-233 carries an N-linked (GlcNAc...) asparagine glycan. A helical transmembrane segment spans residues 250-270 (AYALPTMAFSFLCHTSILPIY). N-linked (GlcNAc...) asparagine glycosylation occurs at Asn-283. Helical transmembrane passes span 288–308 (AIALSFLIYFISALFGYLTFY), 327–347 (VVVMTVKLCILFAVLLTVPLI), 371–391 (FLITLALNIIIVLLAIYVPDI), 394–414 (VFGVVGASTSTCLIFIFPGLF), and 431–451 (AFVLLIFGILVGNFSLALIIF).

Belongs to the amino acid/polyamine transporter 2 family.

It is found in the cell membrane. The protein localises to the synapse. The catalysed reaction is L-glutamine(out) = L-glutamine(in). The enzyme catalyses L-glutamate(out) = L-glutamate(in). Its function is as follows. Amino acid transporter with an apparent selectivity for L-glutamine and L-glutamate. May facilitate glutamine uptake in excitatory neurons. The transport mechanism remains to be elucidated. The sequence is that of Solute carrier family 38 member 6 from Homo sapiens (Human).